The chain runs to 288 residues: Chitinase 5 (288 aa).

The signal sequence occupies residues 1-29 (MANSPTPTMLAFLALGLALLLSATGQASA). One can recognise a Chitin-binding type-1 domain in the interval 30 to 64 (QNCGCQSNMCCSKWGYCGTGKDYCGDGCRSGPCYG). Intrachain disulfides connect Cys-32–Cys-40, Cys-34–Cys-46, Cys-39–Cys-53, Cys-57–Cys-62, Cys-107–Cys-156, Cys-169–Cys-178, and Cys-256–Cys-288. Glu-151 (proton donor) is an active-site residue.

Belongs to the glycosyl hydrolase 19 family. Chitinase class IV subfamily. In terms of tissue distribution, expressed in sheaths and meristems and at lower levels in roots and leaves.

It catalyses the reaction Random endo-hydrolysis of N-acetyl-beta-D-glucosaminide (1-&gt;4)-beta-linkages in chitin and chitodextrins.. In terms of biological role, may function in reproductive organs during embryogenesis and seed maturation. This Oryza sativa subsp. japonica (Rice) protein is Chitinase 5 (Cht5).